Reading from the N-terminus, the 759-residue chain is Subtilisin-like protease SBT3.10 (759 aa).

An N-terminal signal peptide occupies residues 1–25 (MSKTIILLAFFLSIVLNVQISFVVA). A propeptide spans 26 to 108 (ESKVYVVYLG…VIPNTLYEMT (83 aa)) (activation peptide). The Inhibitor I9 domain maps to 29–106 (VYVVYLGEKE…VQVIPNTLYE (78 aa)). The Peptidase S8 domain occupies 112-606 (TWDYLGVSPG…GGLINPEKAV (495 aa)). Residue D142 is the Charge relay system of the active site. N-linked (GlcNAc...) asparagine glycans are attached at residues N175 and N202. H218 (charge relay system) is an active-site residue. Residues N233 and N361 are each glycosylated (N-linked (GlcNAc...) asparagine). In terms of domain architecture, PA spans 390 to 464 (DCEKLSANPK…ELGTDILFYI (75 aa)). S537 acts as the Charge relay system in catalysis.

The protein belongs to the peptidase S8 family.

The protein localises to the secreted. The protein is Subtilisin-like protease SBT3.10 of Arabidopsis thaliana (Mouse-ear cress).